Consider the following 235-residue polypeptide: Riboflavin kinase (235 aa).

Positions 45 and 47 each coordinate Mg(2+). Catalysis depends on Glu-140, which acts as the Nucleophile.

It belongs to the flavokinase family. It depends on Zn(2+) as a cofactor. Requires Mg(2+) as cofactor.

The enzyme catalyses riboflavin + ATP = FMN + ADP + H(+). Its pathway is cofactor biosynthesis; FMN biosynthesis; FMN from riboflavin (ATP route): step 1/1. In terms of biological role, catalyzes the phosphorylation of riboflavin (vitamin B2) to form flavin mononucleotide (FMN) coenzyme. The chain is Riboflavin kinase (FMN1) from Chaetomium globosum (strain ATCC 6205 / CBS 148.51 / DSM 1962 / NBRC 6347 / NRRL 1970) (Soil fungus).